The chain runs to 286 residues: Beta-lactamase SHV-8 (286 aa).

Positions 1 to 21 (MRYIRLCIISLLATLPLAVHA) are cleaved as a signal peptide. The Acyl-ester intermediate role is filled by S66. C73 and C119 are joined by a disulfide. Catalysis depends on E164, which acts as the Proton acceptor. 230–232 (KTG) contacts substrate.

Belongs to the class-A beta-lactamase family.

The enzyme catalyses a beta-lactam + H2O = a substituted beta-amino acid. Functionally, SHV enzymes hydrolyze broad spectrum cephalosporins notably cefotaxime and ceftazidime. This is Beta-lactamase SHV-8 (bla) from Escherichia coli.